Reading from the N-terminus, the 377-residue chain is Protein RecA (377 aa).

Glycine 66–threonine 73 is a binding site for ATP. The segment at valine 329–serine 377 is disordered. Positions alanine 342–serine 377 are enriched in low complexity.

This sequence belongs to the RecA family.

The protein localises to the cytoplasm. Can catalyze the hydrolysis of ATP in the presence of single-stranded DNA, the ATP-dependent uptake of single-stranded DNA by duplex DNA, and the ATP-dependent hybridization of homologous single-stranded DNAs. It interacts with LexA causing its activation and leading to its autocatalytic cleavage. This is Protein RecA from Streptomyces avermitilis (strain ATCC 31267 / DSM 46492 / JCM 5070 / NBRC 14893 / NCIMB 12804 / NRRL 8165 / MA-4680).